The primary structure comprises 93 residues: Cell division topological specificity factor (93 aa).

This sequence belongs to the MinE family.

Prevents the cell division inhibition by proteins MinC and MinD at internal division sites while permitting inhibition at polar sites. This ensures cell division at the proper site by restricting the formation of a division septum at the midpoint of the long axis of the cell. The polypeptide is Cell division topological specificity factor (Agathobacter rectalis (strain ATCC 33656 / DSM 3377 / JCM 17463 / KCTC 5835 / VPI 0990) (Eubacterium rectale)).